Consider the following 103-residue polypeptide: uncharacterized protein (103 aa).

This is an uncharacterized protein from Microplitis demolitor (Parasitoid wasp).